A 209-amino-acid polypeptide reads, in one-letter code: Glutathione S-transferase 1-1 (209 aa).

The GST N-terminal domain maps to 1 to 81; sequence MADFYYLPGS…YLVEKYGKTD (81 aa). Glutathione-binding positions include Ser10, 51 to 53, and 65 to 67; these read HTI and ESR. In terms of domain architecture, GST C-terminal spans 87-209; it reads CPKKRAVINQ…GCLEFKKYFE (123 aa).

This sequence belongs to the GST superfamily. Theta family. As to quaternary structure, homodimer.

It carries out the reaction RX + glutathione = an S-substituted glutathione + a halide anion + H(+). It catalyses the reaction 1,1,1-trichloro-2,2-bis(4-chlorophenyl)ethane = 1,1-dichloro-2,2-bis(4-chlorophenyl)ethylene + chloride + H(+). Its function is as follows. Conjugation of reduced glutathione to a wide number of exogenous and endogenous hydrophobic electrophiles. Has DDT dehydrochlorinase activity. The chain is Glutathione S-transferase 1-1 (GstD1) from Drosophila simulans (Fruit fly).